Reading from the N-terminus, the 225-residue chain is Ribosome maturation factor RimM (225 aa).

The PRC barrel domain maps to 144–225; that stretch reads ADEFYWVDLI…RIVVDWEADY (82 aa).

It belongs to the RimM family. In terms of assembly, binds ribosomal protein uS19.

The protein resides in the cytoplasm. An accessory protein needed during the final step in the assembly of 30S ribosomal subunit, possibly for assembly of the head region. Essential for efficient processing of 16S rRNA. May be needed both before and after RbfA during the maturation of 16S rRNA. It has affinity for free ribosomal 30S subunits but not for 70S ribosomes. This chain is Ribosome maturation factor RimM, found in Burkholderia vietnamiensis (strain G4 / LMG 22486) (Burkholderia cepacia (strain R1808)).